The sequence spans 508 residues: MTRALLSVSDKSGLIPFAKNLVELGYELVSTGGTHKVLIDAGLDVISIDEVTDFPEMLDGRVKTLHPRVHAGLLARRDLPEHMAKLAEFDITPIDMVVVNLYPFKSTIQKEGVTEAEAIENIDIGGPSMLRSAAKNFASVLPIVDPKDYDVVVNKLKAGEVDREYRKSLAAKVFQHTASYDALIANYLTETSFPENLTLAYEKFDDMRYGENPHQPAAAYKTALPEAYSVLNADILHGKQLSYNNIRDADAALRIIAEYEETTVVTVKHMNPAGIGQGQTLEAAWDQAFAADDISIFGGIVALNREVDAATAEKMHDIFLEIIIAPSFTPEAYEILAAKKNLRLLTLPFTTSIPQKLEVTSVLGGVVVQERDLVGESENNFTVVSKAQPTKEQLQAMVFAQKVVKHVKSNAIVVARNGQTLGIGAGQPNRIDSVVYSIQKAEKKPGFDEAVLASDAFFPMDDSVQYAAEHGIKAIVEPGGSIKDKDSIAKADELGVVLIFSGTRHFKH.

Residues 1-144 (MTRALLSVSD…KNFASVLPIV (144 aa)) form the MGS-like domain.

The protein belongs to the PurH family.

The catalysed reaction is (6R)-10-formyltetrahydrofolate + 5-amino-1-(5-phospho-beta-D-ribosyl)imidazole-4-carboxamide = 5-formamido-1-(5-phospho-D-ribosyl)imidazole-4-carboxamide + (6S)-5,6,7,8-tetrahydrofolate. It catalyses the reaction IMP + H2O = 5-formamido-1-(5-phospho-D-ribosyl)imidazole-4-carboxamide. It functions in the pathway purine metabolism; IMP biosynthesis via de novo pathway; 5-formamido-1-(5-phospho-D-ribosyl)imidazole-4-carboxamide from 5-amino-1-(5-phospho-D-ribosyl)imidazole-4-carboxamide (10-formyl THF route): step 1/1. The protein operates within purine metabolism; IMP biosynthesis via de novo pathway; IMP from 5-formamido-1-(5-phospho-D-ribosyl)imidazole-4-carboxamide: step 1/1. The protein is Bifunctional purine biosynthesis protein PurH of Leuconostoc mesenteroides subsp. mesenteroides (strain ATCC 8293 / DSM 20343 / BCRC 11652 / CCM 1803 / JCM 6124 / NCDO 523 / NBRC 100496 / NCIMB 8023 / NCTC 12954 / NRRL B-1118 / 37Y).